Consider the following 735-residue polypeptide: Catalase-peroxidase (735 aa).

2 stretches are compositionally biased toward polar residues: residues 1–10 (MENQNRQNAA) and 17–26 (SVTNQSSNRT). The disordered stretch occupies residues 1 to 30 (MENQNRQNAAQCPFHGSVTNQSSNRTTNKD). The segment at residues 100–223 (WHSAGTYRIG…LAAVQMGLIY (124 aa)) is a cross-link (tryptophyl-tyrosyl-methioninium (Trp-Tyr) (with M-249)). His101 serves as the catalytic Proton acceptor. A cross-link (tryptophyl-tyrosyl-methioninium (Tyr-Met) (with W-100)) is located at residues 223–249 (YVNPEGPDGKPDPKAAARDIRETFRRM). His264 contacts heme b.

It belongs to the peroxidase family. Peroxidase/catalase subfamily. As to quaternary structure, homodimer or homotetramer. Requires heme b as cofactor. Post-translationally, formation of the three residue Trp-Tyr-Met cross-link is important for the catalase, but not the peroxidase activity of the enzyme.

The enzyme catalyses H2O2 + AH2 = A + 2 H2O. It carries out the reaction 2 H2O2 = O2 + 2 H2O. Its function is as follows. Bifunctional enzyme with both catalase and broad-spectrum peroxidase activity. Also displays NADH oxidase, INH lyase and isonicotinoyl-NAD synthase activities. The sequence is that of Catalase-peroxidase from Geobacillus stearothermophilus (Bacillus stearothermophilus).